The following is a 493-amino-acid chain: Trigger factor (493 aa).

The region spanning 162–243 (GDFVSLDLSA…VRGVKEKELP (82 aa)) is the PPIase FKBP-type domain. A disordered region spans residues 432–493 (ELALPARPAP…AAVDSGDRDI (62 aa)). Over residues 449-470 (HAGHDHEGHDHADHAGHDHAGD) the composition is skewed to basic and acidic residues. Residues 474 to 485 (AEPAEAPAATAA) show a composition bias toward low complexity.

This sequence belongs to the FKBP-type PPIase family. Tig subfamily.

Its subcellular location is the cytoplasm. The catalysed reaction is [protein]-peptidylproline (omega=180) = [protein]-peptidylproline (omega=0). Its function is as follows. Involved in protein export. Acts as a chaperone by maintaining the newly synthesized protein in an open conformation. Functions as a peptidyl-prolyl cis-trans isomerase. This is Trigger factor from Frankia alni (strain DSM 45986 / CECT 9034 / ACN14a).